The primary structure comprises 676 residues: Serine/threonine-protein kinase Haspin homolog ALK2 (676 aa).

The interval 53-93 (HKGSAEDESQSFFTSSDSPTSKTRPVGKTIENDDYYGKRSS) is disordered. Polar residues predominate over residues 62–75 (QSFFTSSDSPTSKT). The short motif at 116–118 (KEN) is the KEN box element. Positions 150–158 (RTPLRPISN) match the D box motif. Positions 228 to 312 (SSRSVNDQDP…HKTSHSSLNK (85 aa)) are disordered. Residues 232–259 (VNDQDPNFVQPKPTNSLQKKSSISSFHN) show a composition bias toward polar residues. Positions 383-672 (LCDVKYILHD…TCGDLLSLKG (290 aa)) constitute a Protein kinase domain. Residues 389 to 397 (ILHDLREAQ) and lysine 430 contribute to the ATP site.

The protein belongs to the protein kinase superfamily. Ser/Thr protein kinase family. Haspin subfamily. In terms of processing, periodically phosphorylated during the cell cycle with a phosphorylation peak during mitosis and hyperphosphorylated after DNA damage.

The catalysed reaction is L-seryl-[protein] + ATP = O-phospho-L-seryl-[protein] + ADP + H(+). It carries out the reaction L-threonyl-[protein] + ATP = O-phospho-L-threonyl-[protein] + ADP + H(+). In terms of biological role, serine/threonine haspin-like protein kinase involved in cell cycle regulation. This Saccharomyces cerevisiae (strain ATCC 204508 / S288c) (Baker's yeast) protein is Serine/threonine-protein kinase Haspin homolog ALK2 (ALK2).